Here is a 212-residue protein sequence, read N- to C-terminus: Large ribosomal subunit protein uL4 (212 aa).

Positions 45 to 71 (RQGNASTKTRAEVRGGGRKPWRQKGTG) are disordered. A compositionally biased stretch (basic residues) spans 60-71 (GGRKPWRQKGTG).

Belongs to the universal ribosomal protein uL4 family. As to quaternary structure, part of the 50S ribosomal subunit.

One of the primary rRNA binding proteins, this protein initially binds near the 5'-end of the 23S rRNA. It is important during the early stages of 50S assembly. It makes multiple contacts with different domains of the 23S rRNA in the assembled 50S subunit and ribosome. Its function is as follows. Forms part of the polypeptide exit tunnel. This chain is Large ribosomal subunit protein uL4, found in Nostoc punctiforme (strain ATCC 29133 / PCC 73102).